Reading from the N-terminus, the 474-residue chain is PRAME family member 14 (474 aa).

5 LRR repeats span residues Gln15–Pro38, Leu204–Lys229, Leu271–Pro294, Leu319–Ala342, and Met391–Ala414.

The protein belongs to the PRAME family.

This is PRAME family member 14 from Homo sapiens (Human).